We begin with the raw amino-acid sequence, 706 residues long: Fatty acid oxidation complex subunit alpha (706 aa).

An enoyl-CoA hydratase region spans residues 1 to 188 (MEKTFNLTRR…KMGLVNDVVP (188 aa)). The tract at residues 308 to 706 (RKVKKAVILG…TMAQENAHFF (399 aa)) is 3-hydroxyacyl-CoA dehydrogenase.

It in the N-terminal section; belongs to the enoyl-CoA hydratase/isomerase family. In the central section; belongs to the 3-hydroxyacyl-CoA dehydrogenase family. Heterotetramer of two alpha chains (FadJ) and two beta chains (FadI).

It is found in the cytoplasm. It carries out the reaction a (3S)-3-hydroxyacyl-CoA = a (2E)-enoyl-CoA + H2O. The catalysed reaction is a 4-saturated-(3S)-3-hydroxyacyl-CoA = a (3E)-enoyl-CoA + H2O. It catalyses the reaction a (3S)-3-hydroxyacyl-CoA + NAD(+) = a 3-oxoacyl-CoA + NADH + H(+). The enzyme catalyses (3S)-3-hydroxybutanoyl-CoA = (3R)-3-hydroxybutanoyl-CoA. It participates in lipid metabolism; fatty acid beta-oxidation. Its function is as follows. Catalyzes the formation of a hydroxyacyl-CoA by addition of water on enoyl-CoA. Also exhibits 3-hydroxyacyl-CoA epimerase and 3-hydroxyacyl-CoA dehydrogenase activities. This is Fatty acid oxidation complex subunit alpha from Shewanella baltica (strain OS155 / ATCC BAA-1091).